The sequence spans 728 residues: 1,4-alpha-glucan branching enzyme GlgB (728 aa).

Aspartate 405 (nucleophile) is an active-site residue. Glutamate 458 acts as the Proton donor in catalysis.

The protein belongs to the glycosyl hydrolase 13 family. GlgB subfamily. As to quaternary structure, monomer.

It catalyses the reaction Transfers a segment of a (1-&gt;4)-alpha-D-glucan chain to a primary hydroxy group in a similar glucan chain.. It participates in glycan biosynthesis; glycogen biosynthesis. In terms of biological role, catalyzes the formation of the alpha-1,6-glucosidic linkages in glycogen by scission of a 1,4-alpha-linked oligosaccharide from growing alpha-1,4-glucan chains and the subsequent attachment of the oligosaccharide to the alpha-1,6 position. This is 1,4-alpha-glucan branching enzyme GlgB from Salmonella typhi.